A 198-amino-acid polypeptide reads, in one-letter code: Protein GrpE (198 aa).

Positions 1–27 are enriched in basic and acidic residues; the sequence is MEERNEQVVEETKEAQTEEATIEKNSE. Residues 1-39 are disordered; sequence MEERNEQVVEETKEAQTEEATIEKNSEESVTEEATEETV. Residues 29–39 show a composition bias toward acidic residues; that stretch reads SVTEEATEETV.

It belongs to the GrpE family. In terms of assembly, homodimer.

It localises to the cytoplasm. Participates actively in the response to hyperosmotic and heat shock by preventing the aggregation of stress-denatured proteins, in association with DnaK and GrpE. It is the nucleotide exchange factor for DnaK and may function as a thermosensor. Unfolded proteins bind initially to DnaJ; upon interaction with the DnaJ-bound protein, DnaK hydrolyzes its bound ATP, resulting in the formation of a stable complex. GrpE releases ADP from DnaK; ATP binding to DnaK triggers the release of the substrate protein, thus completing the reaction cycle. Several rounds of ATP-dependent interactions between DnaJ, DnaK and GrpE are required for fully efficient folding. The polypeptide is Protein GrpE (Bacillus cytotoxicus (strain DSM 22905 / CIP 110041 / 391-98 / NVH 391-98)).